The chain runs to 701 residues: Vacuolar protein sorting-associated protein 52 B (701 aa).

Coiled-coil stretches lie at residues phenylalanine 23–glutamate 45 and glutamine 511–leucine 533.

It belongs to the VPS52 family. Component of the Golgi-associated retrograde protein (GARP) complex. As to expression, detected in pollen.

Its subcellular location is the golgi apparatus. It localises to the trans-Golgi network membrane. It is found in the endosome membrane. The protein resides in the golgi apparatus membrane. In terms of biological role, may be involved in retrograde transport of early and late endosomes to the late Golgi. The sequence is that of Vacuolar protein sorting-associated protein 52 B (P2) from Arabidopsis thaliana (Mouse-ear cress).